The chain runs to 197 residues: Probable chorismate pyruvate-lyase (197 aa).

Substrate is bound by residues arginine 66, leucine 104, and glutamate 169.

Belongs to the UbiC family.

It localises to the cytoplasm. The enzyme catalyses chorismate = 4-hydroxybenzoate + pyruvate. The protein operates within cofactor biosynthesis; ubiquinone biosynthesis. Its function is as follows. Removes the pyruvyl group from chorismate, with concomitant aromatization of the ring, to provide 4-hydroxybenzoate (4HB) for the ubiquinone pathway. This Albidiferax ferrireducens (strain ATCC BAA-621 / DSM 15236 / T118) (Rhodoferax ferrireducens) protein is Probable chorismate pyruvate-lyase.